Consider the following 338-residue polypeptide: DNA-directed RNA polymerase subunit alpha (338 aa).

An alpha N-terminal domain (alpha-NTD) region spans residues 1–234 (MIHKNWAELI…DQLSIFVNFE (234 aa)). Residues 250–338 (FNPLLLKKVD…DLAKRFEDQF (89 aa)) are alpha C-terminal domain (alpha-CTD).

The protein belongs to the RNA polymerase alpha chain family. In terms of assembly, homodimer. The RNAP catalytic core consists of 2 alpha, 1 beta, 1 beta' and 1 omega subunit. When a sigma factor is associated with the core the holoenzyme is formed, which can initiate transcription.

It catalyses the reaction RNA(n) + a ribonucleoside 5'-triphosphate = RNA(n+1) + diphosphate. Functionally, DNA-dependent RNA polymerase catalyzes the transcription of DNA into RNA using the four ribonucleoside triphosphates as substrates. This is DNA-directed RNA polymerase subunit alpha from Cereibacter sphaeroides (strain ATCC 17029 / ATH 2.4.9) (Rhodobacter sphaeroides).